The sequence spans 237 residues: Phosphoribosylaminoimidazole-succinocarboxamide synthase (237 aa).

Belongs to the SAICAR synthetase family.

The catalysed reaction is 5-amino-1-(5-phospho-D-ribosyl)imidazole-4-carboxylate + L-aspartate + ATP = (2S)-2-[5-amino-1-(5-phospho-beta-D-ribosyl)imidazole-4-carboxamido]succinate + ADP + phosphate + 2 H(+). Its pathway is purine metabolism; IMP biosynthesis via de novo pathway; 5-amino-1-(5-phospho-D-ribosyl)imidazole-4-carboxamide from 5-amino-1-(5-phospho-D-ribosyl)imidazole-4-carboxylate: step 1/2. This chain is Phosphoribosylaminoimidazole-succinocarboxamide synthase, found in Methanosarcina mazei (strain ATCC BAA-159 / DSM 3647 / Goe1 / Go1 / JCM 11833 / OCM 88) (Methanosarcina frisia).